The sequence spans 631 residues: Phosphomethylpyrimidine synthase (631 aa).

Substrate-binding positions include N239, M268, Y297, H333, 353-355 (SRG), 394-397 (DGLR), and E433. Residue H437 participates in Zn(2+) binding. Y460 contacts substrate. Residue H501 participates in Zn(2+) binding. [4Fe-4S] cluster contacts are provided by C581, C584, and C589.

This sequence belongs to the ThiC family. Homodimer. Requires [4Fe-4S] cluster as cofactor.

It catalyses the reaction 5-amino-1-(5-phospho-beta-D-ribosyl)imidazole + S-adenosyl-L-methionine = 4-amino-2-methyl-5-(phosphooxymethyl)pyrimidine + CO + 5'-deoxyadenosine + formate + L-methionine + 3 H(+). It functions in the pathway cofactor biosynthesis; thiamine diphosphate biosynthesis. Its function is as follows. Catalyzes the synthesis of the hydroxymethylpyrimidine phosphate (HMP-P) moiety of thiamine from aminoimidazole ribotide (AIR) in a radical S-adenosyl-L-methionine (SAM)-dependent reaction. The protein is Phosphomethylpyrimidine synthase of Escherichia coli O6:K15:H31 (strain 536 / UPEC).